A 112-amino-acid polypeptide reads, in one-letter code: 2Fe-2S ferredoxin (112 aa).

Residues 5–107 (IKVTFIINDG…GIKVRIPATT (103 aa)) enclose the 2Fe-2S ferredoxin-type domain. Residues Cys-42, Cys-48, Cys-51, and Cys-88 each coordinate [2Fe-2S] cluster.

This sequence belongs to the adrenodoxin/putidaredoxin family. [2Fe-2S] cluster serves as cofactor.

Functionally, ferredoxin are iron-sulfur proteins that transfer electrons in a wide variety of metabolic reactions. The sequence is that of 2Fe-2S ferredoxin (fdxB) from Rickettsia conorii (strain ATCC VR-613 / Malish 7).